The following is a 350-amino-acid chain: C5a anaphylatoxin chemotactic receptor 1 (350 aa).

Topologically, residues A1–T36 are extracellular. N-linked (GlcNAc...) asparagine glycosylation is present at N5. Sulfotyrosine is present on residues Y10 and Y13. The chain crosses the membrane as a helical span at residues I37–L63. The Cytoplasmic segment spans residues E64 to T68. Residues V69–F92 form a helical membrane-spanning segment. The Extracellular segment spans residues V93 to S109. C108 and C187 are joined by a disulfide. Residues V110–A131 form a helical membrane-spanning segment. Residues D132–A152 lie on the Cytoplasmic side of the membrane. Residues W153–Y173 traverse the membrane as a helical segment. Residues R174–R200 are Extracellular-facing. Residues A201 to L226 traverse the membrane as a helical segment. At L227–K242 the chain is on the cytoplasmic side. A helical membrane pass occupies residues V243 to L265. The Extracellular segment spans residues A266–D282. Residues P283 to A303 form a helical membrane-spanning segment. The Cytoplasmic portion of the chain corresponds to G304–V350. Phosphoserine occurs at positions 314, 317, 327, 332, 334, and 338.

It belongs to the G-protein coupled receptor 1 family. As to quaternary structure, homodimer. May also form higher-order oligomers. Interacts (when phosphorylated) with ARRB1 and ARRB2; the interaction is associated with internalization of C5aR. Sulfation plays a critical role in the association of C5aR with C5a, but no significant role in the ability of the receptor to transduce a signal and mobilize calcium in response to a small peptide agonist. In terms of processing, phosphorylated on serine residues in response to C5a binding, resulting in internalization of the receptor and short-term desensitization to C5a.

The protein resides in the cell membrane. Its subcellular location is the cytoplasmic vesicle. Functionally, receptor for the chemotactic and inflammatory peptide anaphylatoxin C5a. The ligand interacts with at least two sites on the receptor: a high-affinity site on the extracellular N-terminus, and a second site in the transmembrane region which activates downstream signaling events. Receptor activation stimulates chemotaxis, granule enzyme release, intracellular calcium release and superoxide anion production. In Oryctolagus cuniculus (Rabbit), this protein is C5a anaphylatoxin chemotactic receptor 1 (C5AR1).